The sequence spans 560 residues: 2-succinyl-5-enolpyruvyl-6-hydroxy-3-cyclohexene-1-carboxylate synthase (560 aa).

This sequence belongs to the TPP enzyme family. MenD subfamily. In terms of assembly, homodimer. It depends on Mg(2+) as a cofactor. Requires Mn(2+) as cofactor. Thiamine diphosphate serves as cofactor.

The catalysed reaction is isochorismate + 2-oxoglutarate + H(+) = 5-enolpyruvoyl-6-hydroxy-2-succinyl-cyclohex-3-ene-1-carboxylate + CO2. It participates in quinol/quinone metabolism; 1,4-dihydroxy-2-naphthoate biosynthesis; 1,4-dihydroxy-2-naphthoate from chorismate: step 2/7. It functions in the pathway quinol/quinone metabolism; menaquinone biosynthesis. Catalyzes the thiamine diphosphate-dependent decarboxylation of 2-oxoglutarate and the subsequent addition of the resulting succinic semialdehyde-thiamine pyrophosphate anion to isochorismate to yield 2-succinyl-5-enolpyruvyl-6-hydroxy-3-cyclohexene-1-carboxylate (SEPHCHC). The sequence is that of 2-succinyl-5-enolpyruvyl-6-hydroxy-3-cyclohexene-1-carboxylate synthase from Lactococcus lactis subsp. lactis (strain IL1403) (Streptococcus lactis).